A 138-amino-acid chain; its full sequence is Basic phospholipase A2 homolog Tpu-K49a (138 aa).

Residues 1-16 form the signal peptide; it reads MRTLWIMAVLLVGVEG. 6 disulfide bridges follow: Cys-42/Cys-131, Cys-44/Cys-60, Cys-59/Cys-111, Cys-65/Cys-138, Cys-66/Cys-104, and Cys-91/Cys-102. Positions 121–133 are important for membrane-damaging activities in eukaryotes and bacteria; heparin-binding; it reads KKERINTKIFCKK.

Monomer. Expressed by the venom gland.

The protein localises to the secreted. Snake venom phospholipase A2 homolog that lacks catalytic activity. Induces local edema a few hours after injection in the hind foot. Is myotoxic. A model of myotoxic mechanism has been proposed: an apo Lys49-PLA2 is activated by the entrance of a hydrophobic molecule (e.g. fatty acid) at the hydrophobic channel of the protein leading to a reorientation of a monomer. This reorientation causes a transition between 'inactive' to 'active' states, causing alignment of C-terminal and membrane-docking sites (MDoS) side-by-side and putting the membrane-disruption sites (MDiS) in the same plane, exposed to solvent and in a symmetric position for both monomers. The MDoS region stabilizes the toxin on membrane by the interaction of charged residues with phospholipid head groups. Subsequently, the MDiS region destabilizes the membrane with penetration of hydrophobic residues. This insertion causes a disorganization of the membrane, allowing an uncontrolled influx of ions (i.e. calcium and sodium), and eventually triggering irreversible intracellular alterations and cell death. This is Basic phospholipase A2 homolog Tpu-K49a from Craspedocephalus puniceus (Flat-nosed pitviper).